Consider the following 325-residue polypeptide: Apoptosis-enhancing nuclease (325 aa).

A Nucleolar localization signal motif is present at residues 27–35 (RKRHKRRSR). The interval 85–105 (RAGSGSAPCSRRPAPGKASGP) is disordered. Residues 110-266 (CVAIDCEMVG…EDATTAMELY (157 aa)) form the Exonuclease domain. Positions 165–188 (RQHMRKAVPFQVAQKEILKLLKGK) match the Nuclear localization signal motif. Residues 281-325 (LWTCPEDREPDSSTDMEQYMEDQYWPDDLAHGSRGGAREAQDRRN) form a disordered region. Over residues 308-325 (DLAHGSRGGAREAQDRRN) the composition is skewed to basic and acidic residues.

The protein localises to the nucleus. It is found in the nucleolus. Exonuclease with activity against single- and double-stranded DNA and RNA. Mediates p53-induced apoptosis. When induced by p53 following DNA damage, digests double-stranded DNA to form single-stranded DNA and amplifies DNA damage signals, leading to enhancement of apoptosis. This is Apoptosis-enhancing nuclease (AEN) from Homo sapiens (Human).